Here is a 141-residue protein sequence, read N- to C-terminus: Large ribosomal subunit protein uL14 (141 aa).

It belongs to the universal ribosomal protein uL14 family. In terms of assembly, part of the 50S ribosomal subunit. Forms a cluster with proteins L3 and L24e, part of which may contact the 16S rRNA in 2 intersubunit bridges.

Binds to 23S rRNA. Forms part of two intersubunit bridges in the 70S ribosome. The polypeptide is Large ribosomal subunit protein uL14 (Pyrococcus horikoshii (strain ATCC 700860 / DSM 12428 / JCM 9974 / NBRC 100139 / OT-3)).